Here is a 180-residue protein sequence, read N- to C-terminus: MASMISSSAVTTVSRASRGQSAAVAPFGGLKSMTGFPVKKVNTDITSITSNGGRVKCMQVWPPIGKKKFETLSYLPPLTRDQLLKEVEYLLRKGWVPCLEFELEKGFVYREHNKSPGYYDGRYWTMWKLPMFGTTDASQVLKELDEVVAAYPQAFVRIIGFDNVRQVQCISFIAHTPESY.

The transit peptide at 1–56 directs the protein to the chloroplast; sequence MASMISSSAVTTVSRASRGQSAAVAPFGGLKSMTGFPVKKVNTDITSITSNGGRVK.

This sequence belongs to the RuBisCO small chain family. As to quaternary structure, heterohexadecamer of 8 large and 8 small subunits.

It localises to the plastid. The protein localises to the chloroplast. In terms of biological role, ruBisCO catalyzes two reactions: the carboxylation of D-ribulose 1,5-bisphosphate, the primary event in carbon dioxide fixation, as well as the oxidative fragmentation of the pentose substrate. Both reactions occur simultaneously and in competition at the same active site. Although the small subunit is not catalytic it is essential for maximal activity. This chain is Ribulose bisphosphate carboxylase small subunit, chloroplastic 2, found in Pisum sativum (Garden pea).